A 338-amino-acid polypeptide reads, in one-letter code: Lipoate-protein ligase A (338 aa).

The region spanning 29 to 216 (PATQRVLFLW…AFFAYYGERV (188 aa)) is the BPL/LPL catalytic domain. ATP is bound by residues Arg-71, 76–79 (GAVF), and Lys-134. Lys-134 contributes to the (R)-lipoate binding site.

This sequence belongs to the LplA family. Monomer.

It localises to the cytoplasm. It catalyses the reaction L-lysyl-[lipoyl-carrier protein] + (R)-lipoate + ATP = N(6)-[(R)-lipoyl]-L-lysyl-[lipoyl-carrier protein] + AMP + diphosphate + H(+). Its pathway is protein modification; protein lipoylation via exogenous pathway; protein N(6)-(lipoyl)lysine from lipoate: step 1/2. It participates in protein modification; protein lipoylation via exogenous pathway; protein N(6)-(lipoyl)lysine from lipoate: step 2/2. Catalyzes both the ATP-dependent activation of exogenously supplied lipoate to lipoyl-AMP and the transfer of the activated lipoyl onto the lipoyl domains of lipoate-dependent enzymes. This Cronobacter sakazakii (strain ATCC BAA-894) (Enterobacter sakazakii) protein is Lipoate-protein ligase A.